The sequence spans 169 residues: Transcription regulatory protein SNF11 (169 aa).

The disordered stretch occupies residues 1–24; sequence MSSEIAYSNTNTNTENENRNTGAG. Serine 2 is subject to N-acetylserine. Residues 9 to 21 show a composition bias toward low complexity; that stretch reads NTNTNTENENRNT. 8 repeat units span residues 28 to 31, 32 to 35, 36 to 39, 40 to 43, 44 to 47, 48 to 51, 76 to 80, and 160 to 165. The tract at residues 28–51 is 6 X 4 AA tandem repeats of N-[AT]-[NT]-A; that stretch reads NTNANANANATANATANATANATA. Positions 76 to 165 are 2 X 5 AA repeats of L-L-A-R-V; it reads LLARVIQMNN…SKLYLLLARV (90 aa).

Component of the SWI/SNF global transcription activator complex. The 1.14 MDa SWI/SNF complex is composed of 11 different subunits: one copy each of SWI1, SNF2/SWI2, SNF5, SNF12/SWP73, ARP7/SWP61, ARP9/SWP59; two copies each of SWI3, SNF6, SNF11, SWP82; and three copies of TAF14/SWP29.

The protein localises to the nucleus. Its function is as follows. Involved in transcriptional activation. Component of the SWI/SNF complex, an ATP-dependent chromatin remodeling complex, which is required for the positive and negative regulation of gene expression of a large number of genes. It changes chromatin structure by altering DNA-histone contacts within a nucleosome, leading eventually to a change in nucleosome position, thus facilitating or repressing binding of gene-specific transcription factors. This is Transcription regulatory protein SNF11 (SNF11) from Saccharomyces cerevisiae (strain ATCC 204508 / S288c) (Baker's yeast).